Reading from the N-terminus, the 451-residue chain is UPF0210 protein NMCC_1554 (451 aa).

This sequence belongs to the UPF0210 family. As to quaternary structure, homodimer.

The sequence is that of UPF0210 protein NMCC_1554 from Neisseria meningitidis serogroup C (strain 053442).